Here is a 283-residue protein sequence, read N- to C-terminus: Putative F-box protein At1g60370 (283 aa).

The 50-residue stretch at glycine 4–arginine 53 folds into the F-box domain.

The chain is Putative F-box protein At1g60370 from Arabidopsis thaliana (Mouse-ear cress).